A 1528-amino-acid chain; its full sequence is DNA topoisomerase 2-alpha (1528 aa).

Position 1 is an N-acetylmethionine (Met-1). At Ser-4 the chain carries Phosphoserine. Residue Lys-17 forms a Glycyl lysine isopeptide (Lys-Gly) (interchain with G-Cter in SUMO2) linkage. Residues Asn-90, Asn-119, and Ser-147–Asn-149 each bind ATP. Residues Lys-155 and Lys-156 each participate in a glycyl lysine isopeptide (Lys-Gly) (interchain with G-Cter in SUMO2) cross-link. Gly-160–Lys-167 lines the ATP pocket. Residue Thr-281 is modified to Phosphothreonine. Positions Lys-341–Lys-343 are interaction with DNA. Lys-351 participates in a covalent cross-link: Glycyl lysine isopeptide (Lys-Gly) (interchain with G-Cter in SUMO2). Gln-375 to Lys-377 is a binding site for ATP. Glycyl lysine isopeptide (Lys-Gly) (interchain with G-Cter in SUMO2) cross-links involve residues Lys-385, Lys-396, Lys-415, Lys-417, Lys-424, and Lys-439. The Toprim domain occupies Cys-454–Glu-571. Position 460 (Glu-460) interacts with Mg(2+). Residues Lys-465, Lys-479, and Lys-528 each participate in a glycyl lysine isopeptide (Lys-Gly) (interchain with G-Cter in SUMO2) cross-link. Positions 540 and 542 each coordinate Mg(2+). Residues Lys-583, Lys-598, Lys-613, Lys-621, Lys-624, Lys-631, Lys-638, Lys-654, Lys-661, and Lys-675 each participate in a glycyl lysine isopeptide (Lys-Gly) (interchain with G-Cter in SUMO2) cross-link. In terms of domain architecture, Topo IIA-type catalytic spans Ile-714 to Leu-1168. The active-site O-(5'-phospho-DNA)-tyrosine intermediate is Tyr-804. The interaction with DNA stretch occupies residues Lys-989–Ser-998. Lys-1074 is covalently cross-linked (Glycyl lysine isopeptide (Lys-Gly) (interchain with G-Cter in SUMO2)). 2 disordered regions span residues Lys-1090–Ala-1118 and Lys-1183–Ser-1211. A compositionally biased stretch (acidic residues) spans Asp-1098–Thr-1107. At Ser-1105 the chain carries Phosphoserine; by CK1. Low complexity predominate over residues Glu-1108 to Ala-1118. Residues Lys-1193 and Lys-1201 each participate in a glycyl lysine isopeptide (Lys-Gly) (interchain with G-Cter in SUMO2) cross-link. Position 1211 is a phosphoserine (Ser-1211). Lys-1226 participates in a covalent cross-link: Glycyl lysine isopeptide (Lys-Gly) (interchain with G-Cter in SUMO2). A disordered region spans residues Ala-1229–Phe-1528. A Glycyl lysine isopeptide (Lys-Gly) (interchain with G-Cter in SUMO1); alternate cross-link involves residue Lys-1238. Lys-1238 is covalently cross-linked (Glycyl lysine isopeptide (Lys-Gly) (interchain with G-Cter in SUMO2); alternate). Thr-1245 bears the Phosphothreonine mark. Residues Gln-1258 to Ala-1270 show a composition bias toward basic and acidic residues. Glycyl lysine isopeptide (Lys-Gly) (interchain with G-Cter in SUMO2) cross-links involve residues Lys-1272, Lys-1279, and Lys-1282. Ser-1291, Ser-1293, Ser-1295, and Ser-1298 each carry phosphoserine. Low complexity predominate over residues Asp-1296–Val-1306. Thr-1323 carries the phosphothreonine modification. The span at Leu-1326–Leu-1345 shows a compositional bias: acidic residues. A phosphoserine mark is found at Ser-1328 and Ser-1333. A Phosphothreonine modification is found at Thr-1350. Glycyl lysine isopeptide (Lys-Gly) (interchain with G-Cter in SUMO2) cross-links involve residues Lys-1359 and Lys-1363. A phosphoserine mark is found at Ser-1370 and Ser-1373. Residue Lys-1382 forms a Glycyl lysine isopeptide (Lys-Gly) (interchain with G-Cter in SUMO2) linkage. Ser-1384 and Ser-1388 each carry phosphoserine. Lys-1418 is covalently cross-linked (Glycyl lysine isopeptide (Lys-Gly) (interchain with G-Cter in SUMO2); alternate). Residue Lys-1418 is modified to N6-acetyllysine; alternate. Positions Lys-1429 to Lys-1435 are interaction with PLSCR1. Residue Lys-1438 forms a Glycyl lysine isopeptide (Lys-Gly) (interchain with G-Cter in SUMO2); alternate linkage. Lys-1438 is subject to N6-acetyllysine; alternate. Glycyl lysine isopeptide (Lys-Gly) (interchain with G-Cter in SUMO2) cross-links involve residues Lys-1450 and Lys-1455. Ser-1465, Ser-1467, Ser-1470, and Ser-1472 each carry phosphoserine. Residues Lys-1480 and Lys-1488 each participate in a glycyl lysine isopeptide (Lys-Gly) (interchain with G-Cter in SUMO2) cross-link. Residues Ala-1506–Glu-1519 are compositionally biased toward basic and acidic residues. Ser-1521 carries the phosphoserine modification.

The protein belongs to the type II topoisomerase family. As to quaternary structure, homodimer. Interacts with COPS5. Interacts with RECQL5; this stimulates DNA decatenation. Interacts with SETMAR; stimulates the topoisomerase activity. Interacts with DHX9; this interaction occurs in a E2 enzyme UBE2I- and RNA-dependent manner, negatively regulates DHX9-mediated double-stranded DNA and RNA duplex helicase activity and stimulates TOP2A-mediated supercoiled DNA relaxation activity. Interacts with HNRNPU (via C-terminus); this interaction protects the topoisomerase TOP2A from degradation and positively regulates the relaxation of supercoiled DNA in a RNA-dependent manner. Interacts with MCM3AP. Interacts with ERCC6. Interacts with PLSCR1. Interacts with GCNA; this interaction allows the resolution of topoisomerase II (TOP2A) DNA-protein cross-links. Interacts with POL1RA/RPA1 (via dock II) and UBTF in the context of Pol I complex; may assist Pol I transcription initiation by releasing supercoils occurring during DNA unwinding. Interacts with TPRN; TPRN interacts with a number of DNA damage response proteins, is recruited to sites of DNA damage and may play a role in DNA damage repair. Mg(2+) serves as cofactor. Mn(2+) is required as a cofactor. Requires Ca(2+) as cofactor. Phosphorylation has no effect on catalytic activity. However, phosphorylation at Ser-1105 by CSNK1D/CK1 promotes DNA cleavable complex formation.

The protein resides in the cytoplasm. It is found in the nucleus. It localises to the nucleoplasm. Its subcellular location is the nucleolus. The enzyme catalyses ATP-dependent breakage, passage and rejoining of double-stranded DNA.. Functionally, key decatenating enzyme that alters DNA topology by binding to two double-stranded DNA molecules, generating a double-stranded break in one of the strands, passing the intact strand through the broken strand, and religating the broken strand. May play a role in regulating the period length of BMAL1 transcriptional oscillation. The chain is DNA topoisomerase 2-alpha (Top2a) from Mus musculus (Mouse).